Consider the following 333-residue polypeptide: Large ribosomal subunit protein uL3 (333 aa).

This sequence belongs to the universal ribosomal protein uL3 family. In terms of assembly, part of the 50S ribosomal subunit. Forms a cluster with proteins L14 and L24e.

One of the primary rRNA binding proteins, it binds directly near the 3'-end of the 23S rRNA, where it nucleates assembly of the 50S subunit. This chain is Large ribosomal subunit protein uL3, found in Methanocorpusculum labreanum (strain ATCC 43576 / DSM 4855 / Z).